We begin with the raw amino-acid sequence, 341 residues long: S-adenosylmethionine:tRNA ribosyltransferase-isomerase (341 aa).

The protein belongs to the QueA family. In terms of assembly, monomer.

Its subcellular location is the cytoplasm. It carries out the reaction 7-aminomethyl-7-carbaguanosine(34) in tRNA + S-adenosyl-L-methionine = epoxyqueuosine(34) in tRNA + adenine + L-methionine + 2 H(+). It participates in tRNA modification; tRNA-queuosine biosynthesis. Functionally, transfers and isomerizes the ribose moiety from AdoMet to the 7-aminomethyl group of 7-deazaguanine (preQ1-tRNA) to give epoxyqueuosine (oQ-tRNA). The protein is S-adenosylmethionine:tRNA ribosyltransferase-isomerase of Staphylococcus aureus (strain Mu3 / ATCC 700698).